The following is an 80-amino-acid chain: Large ribosomal subunit protein bL31B (80 aa).

Belongs to the bacterial ribosomal protein bL31 family. Type B subfamily. As to quaternary structure, part of the 50S ribosomal subunit.

The polypeptide is Large ribosomal subunit protein bL31B (Methylobacillus flagellatus (strain ATCC 51484 / DSM 6875 / VKM B-1610 / KT)).